The following is a 165-amino-acid chain: NADH-quinone oxidoreductase subunit I (165 aa).

2 consecutive 4Fe-4S ferredoxin-type domains span residues 57–86 (RRYD…IESE) and 96–125 (SRYD…ETHI). The [4Fe-4S] cluster site is built by Cys-66, Cys-69, Cys-72, Cys-76, Cys-105, Cys-108, Cys-111, and Cys-115.

This sequence belongs to the complex I 23 kDa subunit family. NDH-1 is composed of 14 different subunits. Subunits NuoA, H, J, K, L, M, N constitute the membrane sector of the complex. Requires [4Fe-4S] cluster as cofactor.

It localises to the cell inner membrane. The enzyme catalyses a quinone + NADH + 5 H(+)(in) = a quinol + NAD(+) + 4 H(+)(out). Functionally, NDH-1 shuttles electrons from NADH, via FMN and iron-sulfur (Fe-S) centers, to quinones in the respiratory chain. The immediate electron acceptor for the enzyme in this species is believed to be ubiquinone. Couples the redox reaction to proton translocation (for every two electrons transferred, four hydrogen ions are translocated across the cytoplasmic membrane), and thus conserves the redox energy in a proton gradient. The protein is NADH-quinone oxidoreductase subunit I of Polaromonas sp. (strain JS666 / ATCC BAA-500).